The primary structure comprises 25 residues: Xenoposin precursor fragment BM1 (25 aa).

Expressed by the skin glands.

The protein localises to the secreted. Its function is as follows. Antimicrobial peptide. In Xenopus boumbaensis (Mawa clawed frog), this protein is Xenoposin precursor fragment BM1.